The chain runs to 239 residues: Ribosomal RNA small subunit methyltransferase G (239 aa).

Residues G76, F81, 99 to 101, 128 to 129, and R147 each bind S-adenosyl-L-methionine; these read DSS and IE.

The protein belongs to the methyltransferase superfamily. RNA methyltransferase RsmG family.

The protein resides in the cytoplasm. Functionally, specifically methylates the N7 position of a guanine in 16S rRNA. The protein is Ribosomal RNA small subunit methyltransferase G of Prochlorococcus marinus subsp. pastoris (strain CCMP1986 / NIES-2087 / MED4).